The following is a 364-amino-acid chain: Spermidine/putrescine import ATP-binding protein PotA (364 aa).

In terms of domain architecture, ABC transporter spans 6-236 (IEIRQIYKSY…PANLHVAMFI (231 aa)). 38 to 45 (GPSGCGKT) lines the ATP pocket.

This sequence belongs to the ABC transporter superfamily. Spermidine/putrescine importer (TC 3.A.1.11.1) family. The complex is composed of two ATP-binding proteins (PotA), two transmembrane proteins (PotB and PotC) and a solute-binding protein (PotD).

It localises to the cell inner membrane. It carries out the reaction ATP + H2O + polyamine-[polyamine-binding protein]Side 1 = ADP + phosphate + polyamineSide 2 + [polyamine-binding protein]Side 1.. Functionally, part of the ABC transporter complex PotABCD involved in spermidine/putrescine import. Responsible for energy coupling to the transport system. This Legionella pneumophila (strain Lens) protein is Spermidine/putrescine import ATP-binding protein PotA.